The primary structure comprises 257 residues: Probable 6-phosphogluconolactonase (257 aa).

Belongs to the glucosamine/galactosamine-6-phosphate isomerase family. 6-phosphogluconolactonase subfamily.

The catalysed reaction is 6-phospho-D-glucono-1,5-lactone + H2O = 6-phospho-D-gluconate + H(+). It participates in carbohydrate degradation; pentose phosphate pathway; D-ribulose 5-phosphate from D-glucose 6-phosphate (oxidative stage): step 2/3. Functionally, hydrolysis of 6-phosphogluconolactone to 6-phosphogluconate. The polypeptide is Probable 6-phosphogluconolactonase (Schizosaccharomyces pombe (strain 972 / ATCC 24843) (Fission yeast)).